Reading from the N-terminus, the 354-residue chain is Uroporphyrinogen decarboxylase (354 aa).

Substrate-binding positions include R27 to R31, D77, Y154, T209, and H327.

The protein belongs to the uroporphyrinogen decarboxylase family. In terms of assembly, homodimer.

The protein resides in the cytoplasm. It catalyses the reaction uroporphyrinogen III + 4 H(+) = coproporphyrinogen III + 4 CO2. Its pathway is porphyrin-containing compound metabolism; protoporphyrin-IX biosynthesis; coproporphyrinogen-III from 5-aminolevulinate: step 4/4. Its function is as follows. Catalyzes the decarboxylation of four acetate groups of uroporphyrinogen-III to yield coproporphyrinogen-III. This is Uroporphyrinogen decarboxylase from Histophilus somni (strain 129Pt) (Haemophilus somnus).